The sequence spans 904 residues: DNA mismatch repair protein MutS (904 aa).

655 to 662 (GPNMGGKS) serves as a coordination point for ATP.

The protein belongs to the DNA mismatch repair MutS family.

This protein is involved in the repair of mismatches in DNA. It is possible that it carries out the mismatch recognition step. This protein has a weak ATPase activity. The chain is DNA mismatch repair protein MutS from Rhizorhabdus wittichii (strain DSM 6014 / CCUG 31198 / JCM 15750 / NBRC 105917 / EY 4224 / RW1) (Sphingomonas wittichii).